Here is a 435-residue protein sequence, read N- to C-terminus: Fez family zinc finger protein 2 (435 aa).

Positions 27-42 (SLAFSIERIMAKTSEP) match the Engrailed homology 1 repressor motif. 6 C2H2-type zinc fingers span residues 254–276 (FTCE…MPVH), 282–304 (FVCK…KIIH), 310–332 (HKCN…IRIH), 338–360 (FVCE…KLTH), 366–388 (YKCT…MHTH), and 394–417 (FTCG…RKLH).

The protein belongs to the krueppel C2H2-type zinc-finger protein family.

The protein localises to the nucleus. In terms of biological role, transcription repressor. Component of the regulatory cascade that controls the development of dopaminergic (DA) and serotonergic (5HT) neurons. The chain is Fez family zinc finger protein 2 (fezf2) from Xenopus tropicalis (Western clawed frog).